A 103-amino-acid polypeptide reads, in one-letter code: Small ribosomal subunit protein uS10 (103 aa).

This sequence belongs to the universal ribosomal protein uS10 family. As to quaternary structure, part of the 30S ribosomal subunit.

Involved in the binding of tRNA to the ribosomes. The protein is Small ribosomal subunit protein uS10 of Wigglesworthia glossinidia brevipalpis.